An 87-amino-acid chain; its full sequence is MSSISQNDLSNLDDGSKKEIMTFLESENSKQKVQMSIHQFTNLCFKNCISNVQNADLSSQEEQCLNNCVNRFLDTNIRIVKGLQSIQ.

The Twin CX3C motif signature appears at 44–68 (CFKNCISNVQNADLSSQEEQCLNNC). 2 cysteine pairs are disulfide-bonded: C44/C68 and C48/C64.

Belongs to the small Tim family. Heterohexamer; composed of 3 copies of TIM8 and 3 copies of TIM13, named soluble 70 kDa complex. Associates with the TIM22 complex, whose core is composed of TIM22 and TIM54. Interacts with the transmembrane regions of multi-pass transmembrane proteins in transit.

Its subcellular location is the mitochondrion inner membrane. In terms of biological role, mitochondrial intermembrane chaperone that participates in the import and insertion of some multi-pass transmembrane proteins into the mitochondrial inner membrane. Also required for the transfer of beta-barrel precursors from the TOM complex to the sorting and assembly machinery (SAM complex) of the outer membrane. Acts as a chaperone-like protein that protects the hydrophobic precursors from aggregation and guide them through the mitochondrial intermembrane space. The TIM8-TIM13 complex is non essential and only mediates the import of few proteins, while the predominant TIM9-TIM10 70 kDa complex is crucial and mediates the import of much more proteins. This Kluyveromyces lactis (strain ATCC 8585 / CBS 2359 / DSM 70799 / NBRC 1267 / NRRL Y-1140 / WM37) (Yeast) protein is Mitochondrial import inner membrane translocase subunit TIM8 (TIM8).